An 86-amino-acid polypeptide reads, in one-letter code: Weak toxin 1 (86 aa).

An N-terminal signal peptide occupies residues 1–23 (MKTLLLTLVVVAIVCLDLGYTLT). 5 disulfide bridges follow: C24/C45, C27/C32, C38/C63, C67/C78, and C79/C84.

This sequence belongs to the three-finger toxin family. Ancestral subfamily. Orphan group II sub-subfamily. Expressed by the venom gland.

The protein resides in the secreted. Binds with low affinity to muscular (alpha-1-beta-1-delta-epsilon/CHRNA1-CHRNB1-CHRND-CHRNE) and very low affinity to neuronal (alpha-7/CHRNA7) nicotinic acetylcholine receptor (nAChR). This is Weak toxin 1 from Bungarus candidus (Malayan krait).